A 59-amino-acid chain; its full sequence is Large ribosomal subunit protein bL32 (59 aa).

The tract at residues 1–59 (MAVQQNKKSPSKRGMHRSHDALTAPALSVDSTTGEVHRPHHISPNGMYRGRKVVKVKGE) is disordered. The segment covering 49 to 59 (RGRKVVKVKGE) has biased composition (basic residues).

Belongs to the bacterial ribosomal protein bL32 family.

In Neisseria meningitidis serogroup A / serotype 4A (strain DSM 15465 / Z2491), this protein is Large ribosomal subunit protein bL32 (rpmF).